The following is a 451-amino-acid chain: UPF0210 protein Cbei_2352 (451 aa).

Belongs to the UPF0210 family. As to quaternary structure, homodimer.

This Clostridium beijerinckii (strain ATCC 51743 / NCIMB 8052) (Clostridium acetobutylicum) protein is UPF0210 protein Cbei_2352.